The primary structure comprises 238 residues: tRNA (guanine-N(1)-)-methyltransferase (238 aa).

S-adenosyl-L-methionine contacts are provided by residues Gly-109 and 129–134 (IGDFVL).

The protein belongs to the RNA methyltransferase TrmD family. Homodimer.

Its subcellular location is the cytoplasm. It carries out the reaction guanosine(37) in tRNA + S-adenosyl-L-methionine = N(1)-methylguanosine(37) in tRNA + S-adenosyl-L-homocysteine + H(+). Specifically methylates guanosine-37 in various tRNAs. The sequence is that of tRNA (guanine-N(1)-)-methyltransferase from Exiguobacterium sp. (strain ATCC BAA-1283 / AT1b).